The primary structure comprises 583 residues: Sphingomyelin phosphodiesterase A (583 aa).

An N-terminal signal peptide occupies residues 1-21; that stretch reads MKSIPIILLVLIGLLLASVYS. The Saposin B-type domain maps to 51–133; the sequence is IQLSCDVCQI…GYFKICSATG (83 aa). 3 cysteine pairs are disulfide-bonded: Cys55–Cys129, Cys58–Cys123, and Cys86–Cys97. Asn72 is a glycosylation site (N-linked (GlcNAc...) asparagine). A glycan (N-linked (GlcNAc...) asparagine) is linked at Asn182. Zn(2+)-binding residues include Asp193 and His195. A disulfide bridge links Cys214 with Cys229. Asp258 and Asn298 together coordinate Zn(2+). Residue Asn377 is glycosylated (N-linked (GlcNAc...) asparagine). Zn(2+)-binding residues include His401, His436, and His438. N-linked (GlcNAc...) asparagine glycosylation is found at Asn495, Asn500, Asn537, and Asn547. An intrachain disulfide couples Cys567 to Cys580.

Belongs to the acid sphingomyelinase family. Zn(2+) serves as cofactor.

Its subcellular location is the secreted. Its function is as follows. Converts sphingomyelin to ceramide. The sequence is that of Sphingomyelin phosphodiesterase A (sgmA) from Dictyostelium discoideum (Social amoeba).